Reading from the N-terminus, the 798-residue chain is Type 2 DNA topoisomerase 6 subunit B (798 aa).

ATP-binding positions include N60, D91, 112 to 113 (SR), and 122 to 129 (GQQGIGIS). Residues 221-233 (EPEDSFKSERATE) show a composition bias toward basic and acidic residues. The interval 221 to 245 (EPEDSFKSERATEELPPETEEIRPH) is disordered. K629 is a binding site for ATP.

This sequence belongs to the TOP6B family. In terms of assembly, homodimer. Heterotetramer of two Top6A and two Top6B chains.

It carries out the reaction ATP-dependent breakage, passage and rejoining of double-stranded DNA.. Its function is as follows. Relaxes both positive and negative superturns and exhibits a strong decatenase activity. This is Type 2 DNA topoisomerase 6 subunit B from Natronomonas pharaonis (strain ATCC 35678 / DSM 2160 / CIP 103997 / JCM 8858 / NBRC 14720 / NCIMB 2260 / Gabara) (Halobacterium pharaonis).